A 61-amino-acid polypeptide reads, in one-letter code: LECHNQQSSQAPTTKTCSGETNCYKKWWSDHRGTIIERGCGCPKVKPGVKLNCCTTDRCNN.

Cystine bridges form between Cys-3-Cys-23, Cys-17-Cys-40, Cys-42-Cys-53, and Cys-54-Cys-59.

This sequence belongs to the three-finger toxin family. Short-chain subfamily. Type I alpha-neurotoxin sub-subfamily. In terms of tissue distribution, expressed by the venom gland.

Its subcellular location is the secreted. Its function is as follows. Binds to muscle nicotinic acetylcholine receptor (nAChR) and inhibit acetylcholine from binding to the receptor, thereby impairing neuromuscular transmission. This chain is Short neurotoxin 1, found in Naja samarensis (Peters' cobra).